Here is a 335-residue protein sequence, read N- to C-terminus: Tetraacyldisaccharide 4'-kinase (335 aa).

59–66 contributes to the ATP binding site; it reads TAGGNGKT.

This sequence belongs to the LpxK family.

It catalyses the reaction a lipid A disaccharide + ATP = a lipid IVA + ADP + H(+). Its pathway is glycolipid biosynthesis; lipid IV(A) biosynthesis; lipid IV(A) from (3R)-3-hydroxytetradecanoyl-[acyl-carrier-protein] and UDP-N-acetyl-alpha-D-glucosamine: step 6/6. Its function is as follows. Transfers the gamma-phosphate of ATP to the 4'-position of a tetraacyldisaccharide 1-phosphate intermediate (termed DS-1-P) to form tetraacyldisaccharide 1,4'-bis-phosphate (lipid IVA). The chain is Tetraacyldisaccharide 4'-kinase from Vibrio parahaemolyticus serotype O3:K6 (strain RIMD 2210633).